The chain runs to 116 residues: Ribonuclease P protein component (116 aa).

It belongs to the RnpA family. In terms of assembly, consists of a catalytic RNA component (M1 or rnpB) and a protein subunit.

The enzyme catalyses Endonucleolytic cleavage of RNA, removing 5'-extranucleotides from tRNA precursor.. RNaseP catalyzes the removal of the 5'-leader sequence from pre-tRNA to produce the mature 5'-terminus. It can also cleave other RNA substrates such as 4.5S RNA. The protein component plays an auxiliary but essential role in vivo by binding to the 5'-leader sequence and broadening the substrate specificity of the ribozyme. The polypeptide is Ribonuclease P protein component (Carboxydothermus hydrogenoformans (strain ATCC BAA-161 / DSM 6008 / Z-2901)).